Consider the following 527-residue polypeptide: Peptide chain release factor 3 (527 aa).

The tr-type G domain occupies 9–277 (AKRRTFAIIS…CIVDWAPQPL (269 aa)). GTP-binding positions include 18–25 (SHPDAGKT), 86–90 (DTPGH), and 140–143 (NKLD).

The protein belongs to the TRAFAC class translation factor GTPase superfamily. Classic translation factor GTPase family. PrfC subfamily.

It localises to the cytoplasm. Its function is as follows. Increases the formation of ribosomal termination complexes and stimulates activities of RF-1 and RF-2. It binds guanine nucleotides and has strong preference for UGA stop codons. It may interact directly with the ribosome. The stimulation of RF-1 and RF-2 is significantly reduced by GTP and GDP, but not by GMP. In Pseudomonas paraeruginosa (strain DSM 24068 / PA7) (Pseudomonas aeruginosa (strain PA7)), this protein is Peptide chain release factor 3.